The primary structure comprises 1147 residues: Myosin heavy chain IB (1147 aa).

One can recognise a Myosin motor domain in the interval 9-677 (RGVDDLVLMP…TLFHLEECLD (669 aa)). 103-110 (GESGAGKT) serves as a coordination point for ATP. Serine 315 carries the phosphoserine modification. The tract at residues 551–573 (CDALMEALSRCSPHYIRCIKPND) is actin-binding. The 186-residue stretch at 715–900 (KERQRHSVNR…RANIQIGIAT (186 aa)) folds into the TH1 domain. Disordered stretches follow at residues 901–954 (GLPK…YSQP) and 969–1089 (AAVP…APAA). Composition is skewed to gly residues over residues 916–951 (SGGG…GGGY) and 975–1079 (GRGG…GAGR). Residues 1090–1147 (PAKPQVKALYDYDAQTGDELTFKEGDTIIVHQKDPAGWWEGELNGKRGWVPANYVQDI) enclose the SH3 domain.

The protein belongs to the TRAFAC class myosin-kinesin ATPase superfamily. Myosin family. As to quaternary structure, myosin I heavy chain is single-headed. Dimer of a heavy and a light chain. Inability to self-assemble into filaments.

Functionally, myosin is a protein that binds to F-actin and has ATPase activity that is activated by F-actin. The polypeptide is Myosin heavy chain IB (MIB) (Acanthamoeba castellanii (Amoeba)).